Consider the following 133-residue polypeptide: Ycf54-like protein (133 aa).

This sequence belongs to the ycf54 family.

This chain is Ycf54-like protein, found in Synechocystis sp. (strain ATCC 27184 / PCC 6803 / Kazusa).